The following is an 862-amino-acid chain: Alanine--tRNA ligase (862 aa).

Residues His552, His556, Cys653, and His657 each contribute to the Zn(2+) site.

Belongs to the class-II aminoacyl-tRNA synthetase family. Zn(2+) is required as a cofactor.

The protein resides in the cytoplasm. The catalysed reaction is tRNA(Ala) + L-alanine + ATP = L-alanyl-tRNA(Ala) + AMP + diphosphate. Its function is as follows. Catalyzes the attachment of alanine to tRNA(Ala) in a two-step reaction: alanine is first activated by ATP to form Ala-AMP and then transferred to the acceptor end of tRNA(Ala). Also edits incorrectly charged Ser-tRNA(Ala) and Gly-tRNA(Ala) via its editing domain. In Nitrosospira multiformis (strain ATCC 25196 / NCIMB 11849 / C 71), this protein is Alanine--tRNA ligase.